The following is a 91-amino-acid chain: DNA-directed RNA polymerase subunit omega (91 aa).

It belongs to the RNA polymerase subunit omega family. The RNAP catalytic core consists of 2 alpha, 1 beta, 1 beta' and 1 omega subunit. When a sigma factor is associated with the core the holoenzyme is formed, which can initiate transcription.

It carries out the reaction RNA(n) + a ribonucleoside 5'-triphosphate = RNA(n+1) + diphosphate. Functionally, promotes RNA polymerase assembly. Latches the N- and C-terminal regions of the beta' subunit thereby facilitating its interaction with the beta and alpha subunits. The sequence is that of DNA-directed RNA polymerase subunit omega from Nocardia farcinica (strain IFM 10152).